Reading from the N-terminus, the 863-residue chain is Scm-like with four MBT domains protein 1 (863 aa).

MBT repeat units lie at residues 20–120, 128–232, 242–346, and 354–451; these read FSWE…LEAP, SDWN…LQPP, ADWQ…INPP, and FDWA…LSTP. The segment at 638–773 is disordered; sequence KKKNKRIGRP…SDDENKPPSP (136 aa). The segment covering 660–679 has biased composition (basic residues); sequence KSSKRRKRRKNIFVHKKKRS. Residues 680-691 are compositionally biased toward polar residues; that stretch reads SASVDNTPVGSP. 2 stretches are compositionally biased toward acidic residues: residues 696–710 and 718–727; these read GEDE…EDSL and QQEELQEESE. The segment covering 734–744 has biased composition (low complexity); the sequence is SSSSPTQSETP. A phosphoserine mark is found at S764 and S772. The 69-residue stretch at 793–861 folds into the SAM domain; sequence WSVADVVRFI…RIKFAFYEQF (69 aa).

In terms of assembly, interacts with MYOD1. Component of the SLC (SFMBT1-LSD1-CoREST) corepressor complex, which also contains KDM1A/LSD1 and RCOR1/CoREST. Interacts with KDM1A/LSD1 and RCOR1/CoREST. Interacts with MYOD1. Interacts with L3MBTL3. Highly expressed in the testis, low expression is detected in brain, kidney, heart and lung. Highly expressed in germ cells, where it associates with the synaptic regions of meiotic chromosomes in pachytene stage spermatocytes.

The protein resides in the nucleus. In terms of biological role, histone-binding protein, which is part of various corepressor complexes. Mediates the recruitment of corepressor complexes to target genes, followed by chromatin compaction and repression of transcription. Plays a role during myogenesis: required for the maintenance of undifferentiated states of myogenic progenitor cells via interaction with MYOD1. Interaction with MYOD1 leads to the recruitment of associated corepressors and silencing of MYOD1 target genes. Part of the SLC complex in germ cells, where it may play a role during spermatogenesis. This is Scm-like with four MBT domains protein 1 (Sfmbt1) from Mus musculus (Mouse).